The chain runs to 587 residues: 2-succinyl-5-enolpyruvyl-6-hydroxy-3-cyclohexene-1-carboxylate synthase (587 aa).

Belongs to the TPP enzyme family. MenD subfamily. In terms of assembly, homodimer. Mg(2+) serves as cofactor. Mn(2+) is required as a cofactor. It depends on thiamine diphosphate as a cofactor.

It catalyses the reaction isochorismate + 2-oxoglutarate + H(+) = 5-enolpyruvoyl-6-hydroxy-2-succinyl-cyclohex-3-ene-1-carboxylate + CO2. The protein operates within quinol/quinone metabolism; 1,4-dihydroxy-2-naphthoate biosynthesis; 1,4-dihydroxy-2-naphthoate from chorismate: step 2/7. It functions in the pathway cofactor biosynthesis; phylloquinone biosynthesis. Catalyzes the thiamine diphosphate-dependent decarboxylation of 2-oxoglutarate and the subsequent addition of the resulting succinic semialdehyde-thiamine pyrophosphate anion to isochorismate to yield 2-succinyl-5-enolpyruvyl-6-hydroxy-3-cyclohexene-1-carboxylate (SEPHCHC). The chain is 2-succinyl-5-enolpyruvyl-6-hydroxy-3-cyclohexene-1-carboxylate synthase from Prochlorococcus marinus (strain MIT 9312).